The chain runs to 443 residues: Frizzled/smoothened-like sans CRD protein E (443 aa).

Positions 1-23 (MISHIKKFINLYTIVFLLYILYS) are cleaved as a signal peptide. Over 24 to 83 (NENFFVKGQKLPPGFCPSPLIYRNTTDRQSDIDIGFQFLGETNCVQPCPSLILTENEWNK) the chain is Extracellular. N47 carries an N-linked (GlcNAc...) asparagine glycan. The chain crosses the membrane as a helical span at residues 84 to 104 (VFNMSLVAGTISMFALIFLII). Residues 105 to 120 (TYSPLVNNIKDYTRHT) are Cytoplasmic-facing. Residues 121-141 (VGILFLFSGILIAMTTDGRQL) form a helical membrane-spanning segment. Over 142 to 166 (WDIDLGFKKYCPEPGRFARQSDSKC) the chain is Extracellular. Residues 167–187 (LVTAIFFQFGCVTALLWWAAI) traverse the membrane as a helical segment. Residues 188 to 203 (SVDLWITIKKIKISKK) are Cytoplasmic-facing. A helical transmembrane segment spans residues 204–224 (LFIIYTIAVNIVTIVLTFGPV). Residues 225–248 (GSKQYGYIDAAIGCWLMDLKYQVG) are Extracellular-facing. The helical transmembrane segment at 249 to 269 (YFWAPVGFCLCVGCVSIVLIL) threads the bilayer. Residues 270-289 (KEIYNVSDAVKKKLLAKHLK) lie on the Cytoplasmic side of the membrane. A helical membrane pass occupies residues 290–310 (PLMLIILMLTEFIYMFIFYSY). At 311–350 (TTSKKNHYHDIIEEYVVCLFVHAANPSVCKIGSTISPSAH) the chain is on the extracellular side. Residues 351–371 (FFFHLCIRLMGLEVLIFYGFT) form a helical membrane-spanning segment. Residues 372–443 (RQTRKIWMRS…SGIDDSKHDP (72 aa)) lie on the Cytoplasmic side of the membrane. Composition is skewed to low complexity over residues 397–410 (SSSNDSKSSNNKTS) and 419–432 (ESSEQSNEPEQSIE). A disordered region spans residues 397–443 (SSSNDSKSSNNKTSGRVTGGFGESSEQSNEPEQSIELSGIDDSKHDP).

It belongs to the G-protein coupled receptor Fz/Smo family.

The protein localises to the membrane. This Dictyostelium discoideum (Social amoeba) protein is Frizzled/smoothened-like sans CRD protein E (fscE).